A 454-amino-acid polypeptide reads, in one-letter code: L-serine dehydratase 1 (454 aa).

This sequence belongs to the iron-sulfur dependent L-serine dehydratase family. The cofactor is [4Fe-4S] cluster. Post-translationally, activated by post-translational modification by a system involving at least three gene products. Activation is mimicked in vitro by iron and dithiothreitol. There is considerable evidence for a free-radical activation mechanism.

The catalysed reaction is L-serine = pyruvate + NH4(+). Its pathway is carbohydrate biosynthesis; gluconeogenesis. Also deaminates threonine, particularly when it is present in high concentration. This chain is L-serine dehydratase 1 (sdaA), found in Escherichia coli (strain K12).